A 315-amino-acid chain; its full sequence is GTP cyclohydrolase MptA (315 aa).

It belongs to the GTP cyclohydrolase IV family. In terms of assembly, homodimer. Fe(2+) serves as cofactor.

The enzyme catalyses GTP + H2O = 7,8-dihydroneopterin 2',3'-cyclic phosphate + formate + diphosphate + H(+). The protein operates within cofactor biosynthesis; 5,6,7,8-tetrahydromethanopterin biosynthesis. In terms of biological role, converts GTP to 7,8-dihydro-D-neopterin 2',3'-cyclic phosphate, the first intermediate in the biosynthesis of coenzyme methanopterin. The chain is GTP cyclohydrolase MptA from Methanococcus maripaludis (strain DSM 14266 / JCM 13030 / NBRC 101832 / S2 / LL).